A 364-amino-acid chain; its full sequence is MSGPRAGFYRQELNKTVWEVPQRLQGLRPVGSGAYGSVCSAYDARLRQKVAVKKLSRPFQSLIHARRTYRELRLLKHLKHENVIGLLDVFTPATSIEDFSEVYLVTTLMGADLNNIVKCQALSDEHVQFLVYQLLRGLKYIHSAGIIHRDLKPSNVAVNEDCELRILDFGLARQADEEMTGYVATRWYRAPEIMLNWMHYNQTVDIWSVGCIMAELLQGKALFPGNDYIDQLKRIMEVVGTPSPEVLAKISSEHARTYIQSLPPMPQKDLSSVFHGANPLAIDLLGRMLVLDSDQRVSAAEALAHAYFSQYHDPDDEPEAEPYDESVEAKERTLEEWKELTYQEVLSFKPLEPSQLPGTHEIEQ.

In terms of domain architecture, Protein kinase spans 24–308 (LQGLRPVGSG…AAEALAHAYF (285 aa)). ATP contacts are provided by residues 30-38 (VGSGAYGSV) and Lys-53. Glu-71 provides a ligand contact to nilotinib. The active-site Proton acceptor is the Asp-168. Thr-180 is modified (phosphothreonine; by MAP2K3, MAP2K4 and MAP2K6). Positions 180 to 182 (TGY) match the TXY motif. A Phosphotyrosine; by MAP2K3, MAP2K4 and MAP2K6 modification is found at Tyr-182. The segment at 312-331 (HDPDDEPEAEPYDESVEAKE) is disordered. Over residues 314–326 (PDDEPEAEPYDES) the composition is skewed to acidic residues. Tyr-323 bears the Phosphotyrosine; by ZAP70 mark.

The protein belongs to the protein kinase superfamily. CMGC Ser/Thr protein kinase family. MAP kinase subfamily. As to quaternary structure, interacts with HDAC3 and DUSP16. The cofactor is Mg(2+). Post-translationally, dually phosphorylated on Thr-180 and Tyr-182 by MAP2K3/MKK3, MAP2K4/MKK4 and MAP2K6/MKK6, which activates the enzyme.

Its subcellular location is the cytoplasm. The protein localises to the nucleus. The catalysed reaction is L-seryl-[protein] + ATP = O-phospho-L-seryl-[protein] + ADP + H(+). It carries out the reaction L-threonyl-[protein] + ATP = O-phospho-L-threonyl-[protein] + ADP + H(+). Activated by phosphorylation on threonine and tyrosine by MAP2K3/MKK3, MAP2K4/MKK4 and MAP2K6/MKK6. MAP2K3/MKK3 and MAP2K6/MKK6 are both essential for the activation of MAPK11 induced by environmental stress. HDAC3 interacts directly and selectively with MAPK11 to repress ATF2 transcriptional activity, and regulate TNF gene expression in LPS-stimulated cells. Inhibited by SB203580 and pyridinyl-imidazole related compounds. Functionally, serine/threonine kinase which acts as an essential component of the MAP kinase signal transduction pathway. MAPK11 is one of the four p38 MAPKs which play an important role in the cascades of cellular responses evoked by extracellular stimuli such as pro-inflammatory cytokines or physical stress leading to direct activation of transcription factors. Accordingly, p38 MAPKs phosphorylate a broad range of proteins and it has been estimated that they may have approximately 200 to 300 substrates each. MAPK11 functions are mostly redundant with those of MAPK14. Some of the targets are downstream kinases which are activated through phosphorylation and further phosphorylate additional targets. RPS6KA5/MSK1 and RPS6KA4/MSK2 can directly phosphorylate and activate transcription factors such as CREB1, ATF1, the NF-kappa-B isoform RELA/NFKB3, STAT1 and STAT3, but can also phosphorylate histone H3 and the nucleosomal protein HMGN1. RPS6KA5/MSK1 and RPS6KA4/MSK2 play important roles in the rapid induction of immediate-early genes in response to stress or mitogenic stimuli, either by inducing chromatin remodeling or by recruiting the transcription machinery. On the other hand, two other kinase targets, MAPKAPK2/MK2 and MAPKAPK3/MK3, participate in the control of gene expression mostly at the post-transcriptional level, by phosphorylating ZFP36 (tristetraprolin) and ELAVL1, and by regulating EEF2K, which is important for the elongation of mRNA during translation. MKNK1/MNK1 and MKNK2/MNK2, two other kinases activated by p38 MAPKs, regulate protein synthesis by phosphorylating the initiation factor EIF4E2. In the cytoplasm, the p38 MAPK pathway is an important regulator of protein turnover. For example, CFLAR is an inhibitor of TNF-induced apoptosis whose proteasome-mediated degradation is regulated by p38 MAPK phosphorylation. Ectodomain shedding of transmembrane proteins is regulated by p38 MAPKs as well. In response to inflammatory stimuli, p38 MAPKs phosphorylate the membrane-associated metalloprotease ADAM17. Such phosphorylation is required for ADAM17-mediated ectodomain shedding of TGF-alpha family ligands, which results in the activation of EGFR signaling and cell proliferation. Additional examples of p38 MAPK substrates are the FGFR1. FGFR1 can be translocated from the extracellular space into the cytosol and nucleus of target cells, and regulates processes such as rRNA synthesis and cell growth. FGFR1 translocation requires p38 MAPK activation. In the nucleus, many transcription factors are phosphorylated and activated by p38 MAPKs in response to different stimuli. Classical examples include ATF1, ATF2, ATF6, ELK1, PTPRH, DDIT3, TP53/p53 and MEF2C and MEF2A. The p38 MAPKs are emerging as important modulators of gene expression by regulating chromatin modifiers and remodelers. The promoters of several genes involved in the inflammatory response, such as IL6, IL8 and IL12B, display a p38 MAPK-dependent enrichment of histone H3 phosphorylation on 'Ser-10' (H3S10ph) in LPS-stimulated myeloid cells. This phosphorylation enhances the accessibility of the cryptic NF-kappa-B-binding sites marking promoters for increased NF-kappa-B recruitment. Phosphorylates methyltransferase DOT1L on 'Ser-834', 'Thr-900', 'Ser-902', 'Thr-984', 'Ser-1001', 'Ser-1009' and 'Ser-1104'. The protein is Mitogen-activated protein kinase 11 (Mapk11) of Mus musculus (Mouse).